The following is a 98-amino-acid chain: Feather keratin (98 aa).

Position 1 is an N-acetylalanine (Ala1).

The protein belongs to the avian keratin family. As to quaternary structure, the avian keratins (F-ker, S-ker, C-ker and B-ker) are a complex mixture of very similar polypeptides.

This Chroicocephalus novaehollandiae (Silver gull) protein is Feather keratin.